Here is a 146-residue protein sequence, read N- to C-terminus: Hemoglobin subunit delta (146 aa).

Residues 2–146 (HLTGEEKSAV…VATALAHKYH (145 aa)) form the Globin domain. The residue at position 50 (Ser-50) is a Phosphoserine. Residues His-63 and His-92 each coordinate heme b.

It belongs to the globin family. In terms of assembly, heterotetramer of two delta chains and two alpha chains. Red blood cells.

The protein is Hemoglobin subunit delta (HBD) of Leontocebus nigricollis (Black-mantled tamarin).